Here is a 4138-residue protein sequence, read N- to C-terminus: Fumosorinone synthetase (4138 aa).

In terms of domain architecture, Ketosynthase family 3 (KS3) spans 15–455 (PEPIAIVGSA…GTNAHAIIER (441 aa)). Active-site for beta-ketoacyl synthase activity residues include C189, H328, and H375. Residues 590-921 (VFTGQGAQWP…APDAVSFSTA (332 aa)) form a malonyl-CoA:ACP transacylase (MAT) domain region. The interval 990–1133 (HELLGRRAVD…GLIDVHLGPR (144 aa)) is N-terminal hotdog fold. Positions 990 to 1306 (HELLGRRAVD…GFEVRSVGER (317 aa)) are dehydratase (DH) domain. Residues 990 to 1309 (HELLGRRAVD…VRSVGERDAA (320 aa)) form the PKS/mFAS DH domain. Residue H1022 is the Proton acceptor; for dehydratase activity of the active site. The tract at residues 1157–1309 (LQEIDCEKLY…VRSVGERDAA (153 aa)) is C-terminal hotdog fold. The active-site Proton donor; for dehydratase activity is the D1216. Residues 1456 to 1650 (RFYAEDKGMQ…FSGADHVAHD (195 aa)) are methyltransferase (MT) domain. The ketoreductase (KR) domain stretch occupies residues 2205-2379 (TYLMVGAAGG…AASIIHVGFV (175 aa)). The 81-residue stretch at 2507–2587 (EAAAAVRRAF…QLSTLAAKLA (81 aa)) folds into the Carrier 1 domain. O-(pantetheine 4'-phosphoryl)serine is present on S2547. A disordered region spans residues 2587-2683 (ARQQSPRKEG…TEPKTEDKVS (97 aa)). The span at 2610–2621 (TQDKLVDDKEQK) shows a compositional bias: basic and acidic residues. The span at 2622-2643 (VQVTSSLAKADSLTQEMQASAH) shows a compositional bias: polar residues. A compositionally biased stretch (low complexity) spans 2647–2659 (DSATNPTPSSTAS). Polar residues predominate over residues 2664–2675 (SNSQSTRSTSTE). The tract at residues 2701-3128 (REAPMSAAQA…ASQRVRECAV (428 aa)) is condensation (C) domain. The adenylation (A) (KR) domain stretch occupies residues 3162–3564 (CQKNSARTAI…DGTLLCFGRI (403 aa)). One can recognise a Carrier 2 domain in the interval 3680 to 3759 (EKMTIQEGEL…GMTRCVLAQR (80 aa)). Residue S3719 is modified to O-(pantetheine 4'-phosphoryl)serine. The interval 3813 to 4045 (LTGATGFLGG…LDFGTVDAVV (233 aa)) is reductase (RED) domain.

This sequence in the C-terminal section; belongs to the NRP synthetase family.

Hybrid PKS-NRPS synthetase; part of the gene cluster that mediates the biosynthesis of fumosorinone, a 2-pyridone alkaloid that acts as an inhibitor of protein tyrosine phosphatase 1B which is implicated asa negative regulator of insulin receptor signaling and a potential drug target for the treatment of type II diabetes and other associated metabolic syndromes. The polyketide-amino acid backbone of fumosorinone is first assembled by the PKS-NRPS hybrid fumoS. The PKS modules condense one acetyl-CoA starter unit with 7 malonyl-CoA units, programmed C-methylations occurring after the first 3 and the sixth extensions, and cycles of full reduction occurring after the first 2 extensions. Because fumoS lacks a designated enoyl reductase (ER) domain, the required activity is provided the enoyl reductase fumoC. Upon formation of the polyketide backbone on the thiotemplate, the polyketide is transferred to the NRPS module and linked to tyrosine to produce the acyltetramic acid intermediate called prefumosorinone A. The cytochrome P450 monooxygenase fumoA then probably catalyzes an unprecedented oxidative ring expansion of prefumosorinone A to form prefumosorinone B which contains the 2-pyridone core of fumosorinone. The cytochrome P450 monooxygenase fumoB might hydroxylate the nitrogen of prefumosorinone B, but not the acyltetramic acid prefumosorinone A, to form fumosorinone. This is Fumosorinone synthetase from Cordyceps fumosorosea (strain ARSEF 2679) (Isaria fumosorosea).